Reading from the N-terminus, the 416-residue chain is Probable intermembrane transport protein HI_1671 (416 aa).

8 consecutive transmembrane segments (helical) span residues 62–82 (ILIL…LLGI), 107–127 (IFIC…MLWL), 138–158 (VLLF…LVAL), 172–192 (EINI…LLFI), 263–283 (LIAG…GIYL), 306–326 (FVAF…IFIM), 347–367 (LLHL…VLAL), and 377–397 (IINF…FCTM).

This sequence belongs to the PqiA family.

It localises to the cell inner membrane. This chain is Probable intermembrane transport protein HI_1671, found in Haemophilus influenzae (strain ATCC 51907 / DSM 11121 / KW20 / Rd).